The sequence spans 513 residues: 2,3-bisphosphoglycerate-independent phosphoglycerate mutase (513 aa).

2 residues coordinate Mn(2+): Asp-12 and Ser-62. Ser-62 serves as the catalytic Phosphoserine intermediate. Residues His-123, Arg-153 to Asp-154, Arg-185, Arg-191, Arg-260 to Arg-263, and Lys-333 contribute to the substrate site. Residues Asp-400, His-404, Asp-441, His-442, and His-460 each coordinate Mn(2+).

This sequence belongs to the BPG-independent phosphoglycerate mutase family. Monomer. It depends on Mn(2+) as a cofactor.

The enzyme catalyses (2R)-2-phosphoglycerate = (2R)-3-phosphoglycerate. The protein operates within carbohydrate degradation; glycolysis; pyruvate from D-glyceraldehyde 3-phosphate: step 3/5. Its function is as follows. Catalyzes the interconversion of 2-phosphoglycerate and 3-phosphoglycerate. This is 2,3-bisphosphoglycerate-independent phosphoglycerate mutase from Clostridium tetani (strain Massachusetts / E88).